A 452-amino-acid chain; its full sequence is Gastrin/cholecystokinin type B receptor (452 aa).

Residues 1–21 are disordered; it reads MELLKLNRSVQGPGPGSGSSL. Topologically, residues 1 to 57 are extracellular; that stretch reads MELLKLNRSVQGPGPGSGSSLCRPGVSLLNSSSAGNLSCDPPRIRGTGTRELEMAIR. N-linked (GlcNAc...) asparagine glycosylation is found at asparagine 7, asparagine 30, and asparagine 36. A helical membrane pass occupies residues 58–79; it reads ITLYAVIFLMSVGGNVLIIVVL. Residues 80–87 lie on the Cytoplasmic side of the membrane; that stretch reads GLSRRLRT. A helical transmembrane segment spans residues 88-109; the sequence is VTNAFLLSLAVSDLLLAVACMP. The Extracellular segment spans residues 110–131; it reads FTLLPNLMGTFIFGTVICKAIS. Cysteines 127 and 205 form a disulfide. A helical transmembrane segment spans residues 132–150; it reads YLMGVSVSVSTLNLVAIAL. Over 151 to 170 the chain is Cytoplasmic; that stretch reads ERYSAICRPLQARVWQTRSH. Residues 171–189 traverse the membrane as a helical segment; the sequence is AARVILATWLLSGLLMVPY. Residues 190–219 are Extracellular-facing; it reads PVYTMVQPVGPRVLQCMHRWPSARVQQTWS. The chain crosses the membrane as a helical span at residues 220-242; sequence VLLLLLLFFIPGVVIAVAYGLIS. Residues 243-338 lie on the Cytoplasmic side of the membrane; the sequence is RELYLGLHFD…KLLAKKRVVR (96 aa). The interval 257–286 is disordered; the sequence is SETQSRARNQGGLPGGAAPGPVHQNGGCRP. Residues 339–360 form a helical membrane-spanning segment; sequence MLLVIVLLFFLCWLPVYSVNTW. Residues 361–378 lie on the Extracellular side of the membrane; the sequence is RAFDGPGAQRALSGAPIS. The chain crosses the membrane as a helical span at residues 379 to 399; sequence FIHLLSYVSACVNPLVYCFMH. Over 400-452 the chain is Cytoplasmic; sequence RRFRQACLDTCARCCPRPPRARPQPLPDEDPPTPSIASLSRLSYTTISTLGPG. A lipid anchor (S-palmitoyl cysteine) is attached at cysteine 413. Residues 421–452 are disordered; it reads RPQPLPDEDPPTPSIASLSRLSYTTISTLGPG. The segment covering 434–452 has biased composition (polar residues); it reads SIASLSRLSYTTISTLGPG.

It belongs to the G-protein coupled receptor 1 family. As to expression, parietal cells, pancreas, brain and various neoplastic tissues.

Its subcellular location is the cell membrane. Its function is as follows. Receptor for gastrin and cholecystokinin. The CCK-B receptors occur throughout the central nervous system where they modulate anxiety, analgesia, arousal, and neuroleptic activity. This receptor mediates its action by association with G proteins that activate a phosphatidylinositol-calcium second messenger system. The protein is Gastrin/cholecystokinin type B receptor (Cckbr) of Rattus norvegicus (Rat).